The sequence spans 470 residues: O-acyltransferase pboC (470 aa).

Residues His-149 and Asp-386 each act as proton acceptor in the active site.

It belongs to the plant acyltransferase family. Monomer.

The protein operates within secondary metabolite biosynthesis. Functionally, O-acetyltransferase; part of the gene cluster that mediates the biosynthesis of protubonine B, a hydroxylated and diacetylated cyclo-L-Trp-L-Leu derivative. Within the pathway, pboC catalyzes the acetylation of protubonine D at the hydroxy group to produce protubonine C. The first step of the protubonine B synthesis is performed by the nonribosomal peptide synthetase pboA that catalyzes the formation of cyclo-L-Trp-L-Leu by condensing L-Leu with L-Trp. The flavin-dependent monooxygenase pboD is responsible for hydroxylation at C-3 of the indole ring and subsequent formation of the pyrrolidine ring, leadind to protubonine D. Protubonine D is further diacetylated by two acetyltransferases, pboB and pboC, to form the final product protubonine B via protubonine C. The polypeptide is O-acyltransferase pboC (Aspergillus ustus).